A 405-amino-acid chain; its full sequence is Acetate kinase (405 aa).

N7 is a Mg(2+) binding site. ATP is bound at residue K14. R90 is a substrate binding site. The Proton donor/acceptor role is filled by D147. Residues H207–G211, D282–R284, and G331–N335 contribute to the ATP site. E384 is a Mg(2+) binding site.

The protein belongs to the acetokinase family. Homodimer. Mg(2+) is required as a cofactor. The cofactor is Mn(2+).

Its subcellular location is the cytoplasm. The enzyme catalyses acetate + ATP = acetyl phosphate + ADP. Its pathway is metabolic intermediate biosynthesis; acetyl-CoA biosynthesis; acetyl-CoA from acetate: step 1/2. Catalyzes the formation of acetyl phosphate from acetate and ATP. Can also catalyze the reverse reaction. This Clostridium kluyveri (strain ATCC 8527 / DSM 555 / NBRC 12016 / NCIMB 10680 / K1) protein is Acetate kinase.